Reading from the N-terminus, the 740-residue chain is ABC transporter G family member 1 (740 aa).

Residues 82–334 form the ABC transporter domain; that stretch reads LDFRNLFPRR…FTEFGSPIPE (253 aa). Residue 127-134 coordinates ATP; it reads GASGSGKS. The ABC transmembrane type-2 domain occupies 434-644; the sequence is IEIKTLSKRS…PYEAVLQNEF (211 aa). 6 helical membrane passes run 453–473, 488–508, 529–549, 563–585, 594–614, and 713–733; these read LFGI…TVFW, FFAF…PVFL, VLSH…AFAA, GLLF…VTFL, LGYT…GFFI, and LFIT…TLLL.

The protein belongs to the ABC transporter superfamily. ABCG family. Eye pigment precursor importer (TC 3.A.1.204) subfamily.

Its subcellular location is the membrane. This Arabidopsis thaliana (Mouse-ear cress) protein is ABC transporter G family member 1 (ABCG1).